The following is a 320-amino-acid chain: Putative malonate transporter (320 aa).

8 helical membrane-spanning segments follow: residues 1–21 (MAEI…GYLT), 32–52 (MGWL…FKLV), 65–85 (FILT…AIGL), 113–133 (GLAL…IFCF), 167–187 (IAFH…FLSF), 196–216 (LIDY…GVTL), 256–276 (IWVQ…VFVI), and 289–309 (ATIL…LYLI).

Belongs to the auxin efflux carrier (TC 2.A.69) family.

The protein resides in the cell membrane. The polypeptide is Putative malonate transporter (mdcF) (Rhizobium meliloti (strain 1021) (Ensifer meliloti)).